A 365-amino-acid polypeptide reads, in one-letter code: Dihydroorotate dehydrogenase (quinone) (365 aa).

FMN contacts are provided by residues 61–65 (AGFDK) and Ser85. Position 65 (Lys65) interacts with substrate. 110-114 (NRMGF) lines the substrate pocket. Positions 139 and 170 each coordinate FMN. Asn170 provides a ligand contact to substrate. Ser173 functions as the Nucleophile in the catalytic mechanism. Residue Asn175 coordinates substrate. Residues Lys214 and Ser242 each contribute to the FMN site. 243-244 (NT) contacts substrate. FMN is bound by residues Gly266, Gly295, and 316–317 (YS).

This sequence belongs to the dihydroorotate dehydrogenase family. Type 2 subfamily. Monomer. FMN serves as cofactor.

It is found in the cell membrane. It carries out the reaction (S)-dihydroorotate + a quinone = orotate + a quinol. Its pathway is pyrimidine metabolism; UMP biosynthesis via de novo pathway; orotate from (S)-dihydroorotate (quinone route): step 1/1. Its function is as follows. Catalyzes the conversion of dihydroorotate to orotate with quinone as electron acceptor. The sequence is that of Dihydroorotate dehydrogenase (quinone) from Bradyrhizobium diazoefficiens (strain JCM 10833 / BCRC 13528 / IAM 13628 / NBRC 14792 / USDA 110).